A 296-amino-acid polypeptide reads, in one-letter code: Aquaporin NIP1-1 (296 aa).

An N-acetylmethionine modification is found at Met-1. A run of 2 helical transmembrane segments spans residues 57-77 and 84-104; these read LIAE…SVVV and VVTL…LIYS. Positions 114-116 match the NPA 1 motif; the sequence is NPA. The next 3 helical transmembrane spans lie at 136–156, 180–200, and 205–225; these read VISQ…LFGL, AFTM…GVAT, and IGEL…LIAA. The short motif at 233–235 is the NPA 2 element; it reads NPG. A helical transmembrane segment spans residues 249-269; the sequence is GIWIYLVAPTLGAIAGAWVYN. The residue at position 286 (Ser-286) is a Phosphoserine.

The protein belongs to the MIP/aquaporin (TC 1.A.8) family. NIP (TC 1.A.8.12) subfamily. In terms of tissue distribution, expressed in roots.

It is found in the membrane. Water channel probably required to promote glycerol permeability and water transport across cell membranes. The protein is Aquaporin NIP1-1 (NIP1-1) of Arabidopsis thaliana (Mouse-ear cress).